A 376-amino-acid chain; its full sequence is Beta-centractin (376 aa).

Position 1 is an N-acetylmethionine (Met-1). 3'-nitrotyrosine is present on Tyr-4.

The protein belongs to the actin family. ARP1 subfamily.

It localises to the cytoplasm. Its subcellular location is the cytoskeleton. It is found in the microtubule organizing center. The protein localises to the centrosome. Functionally, component of a multi-subunit complex involved in microtubule based vesicle motility. It is associated with the centrosome. In Bos taurus (Bovine), this protein is Beta-centractin (ACTR1B).